The following is a 241-amino-acid chain: Spiralin (241 aa).

The N-terminal stretch at M1–A23 is a signal peptide. C24 is lipidated: N-palmitoyl cysteine. A lipid anchor (S-diacylglycerol cysteine) is attached at C24.

It belongs to the spiralin family. As to quaternary structure, seems to occur as dimer, tetramers, and large oligomers of identical chains. Palmitate and stearate are the major lipid components.

It is found in the cell membrane. In terms of biological role, major membrane protein of spiroplasma. The chain is Spiralin (spi) from Spiroplasma citri.